Consider the following 242-residue polypeptide: Biosynthetic peptidoglycan transglycosylase (242 aa).

A helical membrane pass occupies residues 19–39; it reads ILVVLAVFWGGGIALFSVVPV.

Belongs to the glycosyltransferase 51 family.

It localises to the cell inner membrane. It catalyses the reaction [GlcNAc-(1-&gt;4)-Mur2Ac(oyl-L-Ala-gamma-D-Glu-L-Lys-D-Ala-D-Ala)](n)-di-trans,octa-cis-undecaprenyl diphosphate + beta-D-GlcNAc-(1-&gt;4)-Mur2Ac(oyl-L-Ala-gamma-D-Glu-L-Lys-D-Ala-D-Ala)-di-trans,octa-cis-undecaprenyl diphosphate = [GlcNAc-(1-&gt;4)-Mur2Ac(oyl-L-Ala-gamma-D-Glu-L-Lys-D-Ala-D-Ala)](n+1)-di-trans,octa-cis-undecaprenyl diphosphate + di-trans,octa-cis-undecaprenyl diphosphate + H(+). Its pathway is cell wall biogenesis; peptidoglycan biosynthesis. Its function is as follows. Peptidoglycan polymerase that catalyzes glycan chain elongation from lipid-linked precursors. The sequence is that of Biosynthetic peptidoglycan transglycosylase from Citrobacter koseri (strain ATCC BAA-895 / CDC 4225-83 / SGSC4696).